A 518-amino-acid chain; its full sequence is Chromosomal replication initiator protein DnaA (518 aa).

Positions 1-73 (MTLAEFWPLC…REELAAGRPA (73 aa)) are domain I, interacts with DnaA modulators. Positions 73-180 (AFVFKPGEGV…DAEEARYEQT (108 aa)) are domain II. Positions 144-180 (HEPRQAAGPASRPESAAVAKARTDAQRDAEEARYEQT) are disordered. The span at 164-177 (ARTDAQRDAEEARY) shows a compositional bias: basic and acidic residues. The tract at residues 181–397 (NLSPDYTFDT…GAFNRVGASS (217 aa)) is domain III, AAA+ region. The ATP site is built by Gly-225, Gly-227, Lys-228, and Thr-229. The tract at residues 398-518 (RFMNRPVIDI…YEKLLILIQN (121 aa)) is domain IV, binds dsDNA.

This sequence belongs to the DnaA family. Oligomerizes as a right-handed, spiral filament on DNA at oriC.

The protein localises to the cytoplasm. In terms of biological role, plays an essential role in the initiation and regulation of chromosomal replication. ATP-DnaA binds to the origin of replication (oriC) to initiate formation of the DNA replication initiation complex once per cell cycle. Binds the DnaA box (a 9 base pair repeat at the origin) and separates the double-stranded (ds)DNA. Forms a right-handed helical filament on oriC DNA; dsDNA binds to the exterior of the filament while single-stranded (ss)DNA is stabiized in the filament's interior. The ATP-DnaA-oriC complex binds and stabilizes one strand of the AT-rich DNA unwinding element (DUE), permitting loading of DNA polymerase. After initiation quickly degrades to an ADP-DnaA complex that is not apt for DNA replication. Binds acidic phospholipids. The sequence is that of Chromosomal replication initiator protein DnaA from Neisseria gonorrhoeae (strain ATCC 700825 / FA 1090).